The sequence spans 249 residues: Type III pantothenate kinase (249 aa).

Position 6 to 13 (Asp-6 to Lys-13) interacts with ATP. Substrate is bound by residues Tyr-93 and Gly-100–Arg-103. The Proton acceptor role is filled by Asp-102. Residue Asp-122 coordinates K(+). An ATP-binding site is contributed by Thr-125. A substrate-binding site is contributed by Thr-181.

It belongs to the type III pantothenate kinase family. As to quaternary structure, homodimer. NH4(+) is required as a cofactor. K(+) serves as cofactor.

Its subcellular location is the cytoplasm. The enzyme catalyses (R)-pantothenate + ATP = (R)-4'-phosphopantothenate + ADP + H(+). The protein operates within cofactor biosynthesis; coenzyme A biosynthesis; CoA from (R)-pantothenate: step 1/5. Catalyzes the phosphorylation of pantothenate (Pan), the first step in CoA biosynthesis. The sequence is that of Type III pantothenate kinase from Pseudomonas putida (strain ATCC 700007 / DSM 6899 / JCM 31910 / BCRC 17059 / LMG 24140 / F1).